A 233-amino-acid chain; its full sequence is Orotidine 5'-phosphate decarboxylase (233 aa).

Substrate contacts are provided by residues Asp11, Lys34, 61–70, Thr117, Arg179, Gln189, Gly209, and Arg210; that span reads DLKLHDIPNT. The active-site Proton donor is Lys63.

It belongs to the OMP decarboxylase family. Type 1 subfamily. In terms of assembly, homodimer.

The catalysed reaction is orotidine 5'-phosphate + H(+) = UMP + CO2. The protein operates within pyrimidine metabolism; UMP biosynthesis via de novo pathway; UMP from orotate: step 2/2. Catalyzes the decarboxylation of orotidine 5'-monophosphate (OMP) to uridine 5'-monophosphate (UMP). The polypeptide is Orotidine 5'-phosphate decarboxylase (Streptococcus agalactiae serotype Ia (strain ATCC 27591 / A909 / CDC SS700)).